We begin with the raw amino-acid sequence, 194 residues long: Cytochrome b-245 light chain (194 aa).

The Cytoplasmic portion of the chain corresponds to 2–7 (GQIEWA). The chain crosses the membrane as a helical span at residues 8–30 (MWANEQALASGLILVAGGIVATA). Residues 31 to 35 (GRFTQ) are Extracellular-facing. The chain crosses the membrane as a helical span at residues 36–53 (WYFGTYAIAAGVLVCLLE). The Cytoplasmic segment spans residues 54–69 (YPRGSRAKGSTLERCG). An intramembrane segment occupies 70–80 (QRYLTAVLKLL). At 81 to 86 (GPLSRN) the chain is on the cytoplasmic side. Residues 87 to 104 (YYFRAALHLALSVPAGFL) traverse the membrane as a helical segment. A topological domain (extracellular) is located at residue Leu105. A helical membrane pass occupies residues 106-126 (ATILGTVCLVIASIIYLLAAV). The Cytoplasmic segment spans residues 127–194 (RGEQWTPIEP…NPIPVTDEVV (68 aa)). Residues 134 to 194 (IEPRPKERPQ…NPIPVTDEVV (61 aa)) are disordered. Phosphothreonine is present on Thr147. Lys149 participates in a covalent cross-link: Glycyl lysine isopeptide (Lys-Gly) (interchain with G-Cter in ubiquitin).

It belongs to the p22phox family. Component of the phagocyte NADPH oxidase core complex/cytochrome b558 complex, composed of CYBB (heavy chain (beta)) and CYBA (light chain (alpha)). Component of the phagocyte NADPH oxidase complex composed of an obligatory core heterodimer formed by the membrane proteins CYBA and CYBB and the cytosolic regulatory subunits NCF1/p47-phox, NCF2/p67-phox, NCF4/p40-phox and the small GTPase RAC1 or RAC2. Interacts with NCF1 (via SH3 domain). Interacts with SH3PXD2A. Interacts with DUOX1, DUOX2 and TPO. Interacts with NOX4; this interaction mediates superoxide generation. Interacts with calprotectin (S100A8/9). Interacts with GBP7. Interacts with NOXO1. Forms a heterodimer with NOX3 and is essential for activity and cell membrane localization of NOX3. Interacts with NOX1. Phosphorylation at Thr-147 enhances NADPH oxidase activity by promoting NCF1/p47-phox binding. In terms of processing, ubiquitinated at Lys-149 likely by RNF145.

The protein resides in the cell membrane. Subunit of NADPH oxidase complexes that is required for the NADPH oxidase activity that generates, in various cell types, superoxide from molecular oxygen utilizing NADPH as an electron donor. Subunit of the phagocyte NADPH oxidase complex that mediates the transfer of electrons from cytosolic NADPH to O2 to produce the superoxide anion (O2(-)). In the activated complex, electrons are first transferred from NADPH to flavin adenine dinucleotide (FAD) and subsequently transferred via two heme molecules to molecular oxygen, producing superoxide through an outer-sphere reaction. Activation of the NADPH oxidase complex is initiated by the assembly of cytosolic subunits of the NADPH oxidase complex with the core NADPH oxidase complex to form a complex at the plasma membrane or phagosomal membrane. This activation process is initiated by phosphorylation dependent binding of the cytosolic NCF1/p47-phox subunit to the C-terminus of CYBA/p22-phox. Aassociates with NOX3 to form a functional NADPH oxidase constitutively generating superoxide. The chain is Cytochrome b-245 light chain from Oryctolagus cuniculus (Rabbit).